A 486-amino-acid polypeptide reads, in one-letter code: UDP-GalNAc:beta-1,3-N-acetylgalactosaminyltransferase 2 (486 aa).

The Cytoplasmic portion of the chain corresponds to 1–10 (MRHLLFLCPC). A helical; Signal-anchor for type II membrane protein membrane pass occupies residues 11–31 (VIGVAFHLWLFNFSGLFSWFL). At 32–486 (VWSPHSYDIV…CGNPCACEDR (455 aa)) the chain is on the lumenal side. 2 N-linked (GlcNAc...) asparagine glycosylation sites follow: N103 and N160.

Belongs to the glycosyltransferase 31 family.

The protein localises to the golgi apparatus membrane. It localises to the endoplasmic reticulum. It carries out the reaction 3-O-(N-acetyl-beta-D-glucosaminyl-(1-&gt;4)-alpha-D-mannosyl)-L-threonyl-[protein] + UDP-N-acetyl-alpha-D-galactosamine = 3-O-[beta-D-GalNAc-(1-&gt;3)-beta-D-GlcNAc-(1-&gt;4)-alpha-D-Man]-L-Thr-[protein] + UDP + H(+). It participates in protein modification; protein glycosylation. Its function is as follows. Beta-1,3-N-acetylgalactosaminyltransferase that synthesizes a unique carbohydrate structure, GalNAc-beta-1-3GlcNAc, on N- and O-glycans. Has no galactose nor galactosaminyl transferase activity toward any acceptor substrate. Involved in alpha-dystroglycan (dag1) glycosylation. In Xenopus laevis (African clawed frog), this protein is UDP-GalNAc:beta-1,3-N-acetylgalactosaminyltransferase 2 (b3galnt2).